The following is a 309-amino-acid chain: Homoserine kinase (309 aa).

91–101 provides a ligand contact to ATP; that stretch reads PIGSGLGSSAC.

It belongs to the GHMP kinase family. Homoserine kinase subfamily.

The protein localises to the cytoplasm. The enzyme catalyses L-homoserine + ATP = O-phospho-L-homoserine + ADP + H(+). Its pathway is amino-acid biosynthesis; L-threonine biosynthesis; L-threonine from L-aspartate: step 4/5. Catalyzes the ATP-dependent phosphorylation of L-homoserine to L-homoserine phosphate. This is Homoserine kinase from Serratia proteamaculans (strain 568).